A 217-amino-acid chain; its full sequence is Octanoyltransferase (217 aa).

The BPL/LPL catalytic domain maps to 32-207; sequence SESHDELWIV…TFSQLLGYQH (176 aa). Substrate is bound by residues 71-78, 138-140, and 151-153; these read RGGQVTYH, SLG, and GLA. The active-site Acyl-thioester intermediate is C169.

This sequence belongs to the LipB family.

It localises to the cytoplasm. The catalysed reaction is octanoyl-[ACP] + L-lysyl-[protein] = N(6)-octanoyl-L-lysyl-[protein] + holo-[ACP] + H(+). It participates in protein modification; protein lipoylation via endogenous pathway; protein N(6)-(lipoyl)lysine from octanoyl-[acyl-carrier-protein]: step 1/2. In terms of biological role, catalyzes the transfer of endogenously produced octanoic acid from octanoyl-acyl-carrier-protein onto the lipoyl domains of lipoate-dependent enzymes. Lipoyl-ACP can also act as a substrate although octanoyl-ACP is likely to be the physiological substrate. This chain is Octanoyltransferase, found in Shewanella baltica (strain OS223).